The following is a 336-amino-acid chain: Izumo sperm-egg fusion protein 1 (336 aa).

The N-terminal stretch at 1–16 (MTLPILLGWFLTLCSS) is a signal peptide. Residues 158 to 247 (PPLDCGEHHL…LKDQKGTALS (90 aa)) form the Ig-like C2-type domain. Cys179 and Cys236 are oxidised to a cystine. The helical transmembrane segment at 287 to 307 (SFLTVLILLTVLSITGSLIII) threads the bilayer.

The protein belongs to the Izumo family. In terms of assembly, forms a complex with tmem81 and spaca6 on spermatocyte cell membrane. The complex binds to oocyte protein bncr. In terms of tissue distribution, expressed in sperm.

It is found in the cell membrane. It localises to the cytoplasmic vesicle. Its subcellular location is the secretory vesicle. The protein resides in the acrosome membrane. Its function is as follows. Essential sperm cell-surface protein required for fertilization by acting as a ligand for bncr receptor on egg. The interaction of the complex izumo1:spaca6:tmemt81 with bncr is a necessary adhesion event between sperm and egg that is required for fertilization. This Danio rerio (Zebrafish) protein is Izumo sperm-egg fusion protein 1.